The following is a 1174-amino-acid chain: Ankyrin repeat and LEM domain-containing protein 2 homolog (1174 aa).

Low complexity-rich tracts occupy residues 37 to 56 (NPAS…SAAS), 150 to 164 (SSPT…SSPT), 174 to 198 (LGSN…SSSN), and 205 to 219 (QQQM…PQQP). 2 disordered regions span residues 37–74 (NPAS…YEDP) and 141–230 (PIIS…PFRA). An ANK repeat occupies 338-367 (RGETPLHFAAKNGHVAMVEVLVSYPECKSL). Disordered stretches follow at residues 519–543 (AEAT…HNNN) and 961–981 (GSSS…SPGI). The segment covering 521 to 532 (ATSSPKPTKNVP) has biased composition (polar residues). The segment covering 533-543 (NGTNECEHNNN) has biased composition (low complexity).

Belongs to the ANKLE2 family.

It is found in the endoplasmic reticulum. The protein resides in the nucleus envelope. It localises to the cytoplasm. Its function is as follows. Involved in brain development probably by regulating asymmetric division of neuroblasts. Regulates neuroblast asymmetric cell division by controlling asymmetric protein localization of Mira, Baz, Par-6 and aPKC, and spindle alignment. Also, regulates the localization of kinase Ball during mitosis, specifically maintaining Ball in the nucleus during interphase. Required for proper ER and nuclear envelope morphology in neuroblasts. This is Ankyrin repeat and LEM domain-containing protein 2 homolog from Drosophila melanogaster (Fruit fly).